Consider the following 329-residue polypeptide: Biotin synthase (329 aa).

The region spanning 46–275 (FFGRRLKLVR…LNPKAELRAS (230 aa)) is the Radical SAM core domain. Positions 64, 68, and 71 each coordinate [4Fe-4S] cluster. Positions 108, 140, 200, and 273 each coordinate [2Fe-2S] cluster.

The protein belongs to the radical SAM superfamily. Biotin synthase family. As to quaternary structure, homodimer. Requires [4Fe-4S] cluster as cofactor. The cofactor is [2Fe-2S] cluster.

The enzyme catalyses (4R,5S)-dethiobiotin + (sulfur carrier)-SH + 2 reduced [2Fe-2S]-[ferredoxin] + 2 S-adenosyl-L-methionine = (sulfur carrier)-H + biotin + 2 5'-deoxyadenosine + 2 L-methionine + 2 oxidized [2Fe-2S]-[ferredoxin]. It participates in cofactor biosynthesis; biotin biosynthesis; biotin from 7,8-diaminononanoate: step 2/2. In terms of biological role, catalyzes the conversion of dethiobiotin (DTB) to biotin by the insertion of a sulfur atom into dethiobiotin via a radical-based mechanism. In Thermus thermophilus (strain ATCC BAA-163 / DSM 7039 / HB27), this protein is Biotin synthase.